The chain runs to 248 residues: ATP synthase subunit a (248 aa).

6 helical membrane passes run 34 to 54 (TNAT…LVFG), 91 to 111 (YFPY…LGLL), 121 to 141 (IAVT…LGFV), 147 to 167 (FLGL…LAVI), 196 to 216 (VFAA…AITA), and 220 to 240 (LEVL…CVYL).

The protein belongs to the ATPase A chain family. As to quaternary structure, F-type ATPases have 2 components, CF(1) - the catalytic core - and CF(0) - the membrane proton channel. CF(1) has five subunits: alpha(3), beta(3), gamma(1), delta(1), epsilon(1). CF(0) has three main subunits: a(1), b(2) and c(9-12). The alpha and beta chains form an alternating ring which encloses part of the gamma chain. CF(1) is attached to CF(0) by a central stalk formed by the gamma and epsilon chains, while a peripheral stalk is formed by the delta and b chains.

It is found in the cell inner membrane. Key component of the proton channel; it plays a direct role in the translocation of protons across the membrane. This is ATP synthase subunit a from Paracoccus denitrificans (strain Pd 1222).